The primary structure comprises 77 residues: Cell division topological specificity factor (77 aa).

This sequence belongs to the MinE family.

Functionally, prevents the cell division inhibition by proteins MinC and MinD at internal division sites while permitting inhibition at polar sites. This ensures cell division at the proper site by restricting the formation of a division septum at the midpoint of the long axis of the cell. This is Cell division topological specificity factor from Helicobacter pylori (strain P12).